The following is a 299-amino-acid chain: NAD kinase (299 aa).

The Proton acceptor role is filled by D78. Residues D78–G79, N151–D152, K162, R179, D181, T192–S197, and Q252 contribute to the NAD(+) site.

This sequence belongs to the NAD kinase family. A divalent metal cation is required as a cofactor.

It is found in the cytoplasm. It catalyses the reaction NAD(+) + ATP = ADP + NADP(+) + H(+). Functionally, involved in the regulation of the intracellular balance of NAD and NADP, and is a key enzyme in the biosynthesis of NADP. Catalyzes specifically the phosphorylation on 2'-hydroxyl of the adenosine moiety of NAD to yield NADP. This is NAD kinase from Coxiella burnetii (strain CbuG_Q212) (Coxiella burnetii (strain Q212)).